Reading from the N-terminus, the 117-residue chain is Large ribosomal subunit protein bL20c (117 aa).

This sequence belongs to the bacterial ribosomal protein bL20 family.

The protein resides in the plastid. Its subcellular location is the chloroplast. Functionally, binds directly to 23S ribosomal RNA and is necessary for the in vitro assembly process of the 50S ribosomal subunit. It is not involved in the protein synthesizing functions of that subunit. In Acorus calamus (Sweet flag), this protein is Large ribosomal subunit protein bL20c.